Here is a 119-residue protein sequence, read N- to C-terminus: Large ribosomal subunit protein bL20 (119 aa).

Belongs to the bacterial ribosomal protein bL20 family.

Functionally, binds directly to 23S ribosomal RNA and is necessary for the in vitro assembly process of the 50S ribosomal subunit. It is not involved in the protein synthesizing functions of that subunit. The protein is Large ribosomal subunit protein bL20 of Clostridium perfringens (strain ATCC 13124 / DSM 756 / JCM 1290 / NCIMB 6125 / NCTC 8237 / Type A).